Here is a 275-residue protein sequence, read N- to C-terminus: Pantothenate synthetase (275 aa).

An ATP-binding site is contributed by 26–33 (MGFLHEGH). H33 acts as the Proton donor in catalysis. Q57 contacts (R)-pantoate. Position 57 (Q57) interacts with beta-alanine. 143–146 (GQKD) lines the ATP pocket. Q149 lines the (R)-pantoate pocket. ATP contacts are provided by residues A172 and 180–183 (RSSR).

Belongs to the pantothenate synthetase family. As to quaternary structure, homodimer.

It localises to the cytoplasm. It catalyses the reaction (R)-pantoate + beta-alanine + ATP = (R)-pantothenate + AMP + diphosphate + H(+). It participates in cofactor biosynthesis; (R)-pantothenate biosynthesis; (R)-pantothenate from (R)-pantoate and beta-alanine: step 1/1. Its function is as follows. Catalyzes the condensation of pantoate with beta-alanine in an ATP-dependent reaction via a pantoyl-adenylate intermediate. The chain is Pantothenate synthetase from Gluconobacter oxydans (strain 621H) (Gluconobacter suboxydans).